The chain runs to 341 residues: uncharacterized protein (341 aa).

The helical transmembrane segment at 315 to 337 (VAAWFSGIAGGTFLALKLVSLMM) threads the bilayer.

The protein resides in the cell membrane. This is an uncharacterized protein from Bacillus subtilis (strain 168).